The primary structure comprises 1321 residues: Multidrug resistance protein pgp-1 (1321 aa).

Over 1–77 (MLRNGSLRQS…YTTTLEKLLL (77 aa)) the chain is Cytoplasmic. The region spanning 77 to 381 (LFIGTLVAVI…AGPQLAVLGT (305 aa)) is the ABC transmembrane type-1 1 domain. The helical transmembrane segment at 78-98 (FIGTLVAVITGAGLPLMSILQ) threads the bilayer. Asn115 and Asn125 each carry an N-linked (GlcNAc...) asparagine glycan. The helical transmembrane segment at 144 to 164 (AMTVGMWAAGQITVTCYLYVA) threads the bilayer. Asn190 is a glycosylation site (N-linked (GlcNAc...) asparagine). Helical transmembrane passes span 213 to 233 (KIGM…VAFT), 240 to 260 (LVML…AKSM), 321 to 341 (ISFG…FYIG), and 350 to 370 (LNFG…MALG). Over 371–753 (LAGPQLAVLG…LYHARPHALS (383 aa)) the chain is Cytoplasmic. The 237-residue stretch at 416-652 (ITVENVHFTY…QGLYYDLVTA (237 aa)) folds into the ABC transporter 1 domain. Residue 451 to 458 (GSSGCGKS) coordinates ATP. Helical transmembrane passes span 754 to 774 (LFIG…YSVF) and 798 to 818 (LMFL…TFFM). The ABC transmembrane type-1 2 domain occupies 754–1043 (LFIGMSTATI…ATSYFPEYAK (290 aa)). N-linked (GlcNAc...) asparagine glycosylation is present at Asn850. The next 4 helical transmembrane spans lie at 874–894 (FSTV…AFFY), 895–915 (GWQM…GQYL), 978–998 (IQGL…TCAY), and 1017–1037 (VLRV…ATSY). Residues 1038–1321 (FPEYAKATFA…LTQKQMTEKK (284 aa)) lie on the Cytoplasmic side of the membrane. Positions 1077–1315 (VIFKNVRFAY…KGAYYKLTQK (239 aa)) constitute an ABC transporter 2 domain. 1112–1119 (GPSGCGKS) contributes to the ATP binding site.

This sequence belongs to the ABC transporter superfamily. ABCB family. Multidrug resistance exporter (TC 3.A.1.201) subfamily. In terms of tissue distribution, intestinal cells.

It is found in the membrane. The catalysed reaction is ATP + H2O + xenobioticSide 1 = ADP + phosphate + xenobioticSide 2.. Functionally, energy-dependent efflux pump responsible for decreased drug accumulation in multidrug-resistant cells. In Caenorhabditis elegans, this protein is Multidrug resistance protein pgp-1 (pgp-1).